A 635-amino-acid polypeptide reads, in one-letter code: 1-deoxy-D-xylulose-5-phosphate synthase (635 aa).

Thiamine diphosphate is bound by residues H78 and 119 to 121 (GHA). Position 150 (D150) interacts with Mg(2+). Thiamine diphosphate-binding positions include 151–152 (GS), N179, F291, and E376. Residue N179 coordinates Mg(2+).

This sequence belongs to the transketolase family. DXPS subfamily. As to quaternary structure, homodimer. The cofactor is Mg(2+). It depends on thiamine diphosphate as a cofactor.

It catalyses the reaction D-glyceraldehyde 3-phosphate + pyruvate + H(+) = 1-deoxy-D-xylulose 5-phosphate + CO2. The protein operates within metabolic intermediate biosynthesis; 1-deoxy-D-xylulose 5-phosphate biosynthesis; 1-deoxy-D-xylulose 5-phosphate from D-glyceraldehyde 3-phosphate and pyruvate: step 1/1. Functionally, catalyzes the acyloin condensation reaction between C atoms 2 and 3 of pyruvate and glyceraldehyde 3-phosphate to yield 1-deoxy-D-xylulose-5-phosphate (DXP). The sequence is that of 1-deoxy-D-xylulose-5-phosphate synthase from Chlorobaculum tepidum (strain ATCC 49652 / DSM 12025 / NBRC 103806 / TLS) (Chlorobium tepidum).